We begin with the raw amino-acid sequence, 233 residues long: Pyridoxal 5'-phosphate synthase subunit PdxT (233 aa).

Gly-61–Ser-63 is an L-glutamine binding site. Cys-93 (nucleophile) is an active-site residue. L-glutamine is bound by residues Arg-127 and Ile-163–Arg-164. Catalysis depends on charge relay system residues His-212 and Glu-214.

This sequence belongs to the glutaminase PdxT/SNO family. In terms of assembly, in the presence of PdxS, forms a dodecamer of heterodimers. Only shows activity in the heterodimer.

It catalyses the reaction aldehydo-D-ribose 5-phosphate + D-glyceraldehyde 3-phosphate + L-glutamine = pyridoxal 5'-phosphate + L-glutamate + phosphate + 3 H2O + H(+). The catalysed reaction is L-glutamine + H2O = L-glutamate + NH4(+). It participates in cofactor biosynthesis; pyridoxal 5'-phosphate biosynthesis. In terms of biological role, catalyzes the hydrolysis of glutamine to glutamate and ammonia as part of the biosynthesis of pyridoxal 5'-phosphate. The resulting ammonia molecule is channeled to the active site of PdxS. The sequence is that of Pyridoxal 5'-phosphate synthase subunit PdxT from Paenarthrobacter aurescens (strain TC1).